The chain runs to 215 residues: Probable phosphoglycerate mutase GpmB (215 aa).

Residues R8–N15, Q21–G22, R58, E82–M85, and G151–I152 each bind substrate. Residue H9 is the Tele-phosphohistidine intermediate of the active site. Residue E82 is the Proton donor/acceptor of the active site.

This sequence belongs to the phosphoglycerate mutase family. GpmB subfamily.

The enzyme catalyses (2R)-2-phosphoglycerate = (2R)-3-phosphoglycerate. It functions in the pathway carbohydrate degradation; glycolysis; pyruvate from D-glyceraldehyde 3-phosphate: step 3/5. The sequence is that of Probable phosphoglycerate mutase GpmB from Proteus mirabilis (strain HI4320).